The following is a 492-amino-acid chain: MTLWINGDWITGQGASRVKRNPVSGEVLWQGNDADAAQVGQACRAARAAFPRWARLSLAERQVVVERFAGLLERNKGELTAIIARETGKPRWEAATEVTAMINKIAISIKAYHVRTGEQRSEMPDGAASLRHRPHGVLAVFGPYNFPGHLPNGHIVPALLAGNTIIFKPSELTPWSGEAVMRLWQQAGLPPGVLNLVQGGRETGQALSALEDLDGLLFTGSANTGYQLHRQLSGQPEKILALEMGGNNPLIIDEVADIDAAVHLTIQSAFVTAGQRCTCARRLLLKSGAQGDAFLARLVAVSQRLTPGNWDDEPQPFIGGLISEQAAQQVVTAWQQLEAMGGRTLLAPRLLQSETSLLTPGIIEMTGVAGVPDEEVFGPLLRVWRYDSFEEAILMANNTRFGLSCGLVSPEREKFDQLLLEARAGIVNWNKPLTGAASTAPFGGIGASGNHRPSAWYAADYCAWPMASLESDSLTLPATLNPGLDFSDEVVR.

220 to 225 (GSANTG) lines the NAD(+) pocket. Active-site residues include Glu243 and Cys277.

Belongs to the aldehyde dehydrogenase family. AstD subfamily.

The enzyme catalyses N-succinyl-L-glutamate 5-semialdehyde + NAD(+) + H2O = N-succinyl-L-glutamate + NADH + 2 H(+). It participates in amino-acid degradation; L-arginine degradation via AST pathway; L-glutamate and succinate from L-arginine: step 4/5. Its function is as follows. Catalyzes the NAD-dependent reduction of succinylglutamate semialdehyde into succinylglutamate. This is N-succinylglutamate 5-semialdehyde dehydrogenase from Escherichia coli O139:H28 (strain E24377A / ETEC).